The primary structure comprises 1233 residues: Hemocyanin A-type, units Ode to Odg (1233 aa).

The interval 1-4 (EGNE) is ODD. Residues 5 to 422 (YLVRKNVERL…KQDADIDIPL (418 aa)) form an ODE region. Histidine 45 provides a ligand contact to Cu cation. A disulfide bridge links cysteine 51 with cysteine 62. A cross-link (2'-(S-cysteinyl)-histidine (Cys-His)) is located at residues 63 to 65 (CLH). The Cu cation site is built by histidine 65, histidine 74, histidine 186, histidine 190, and histidine 217. 2 cysteine pairs are disulfide-bonded: cysteine 176-cysteine 243 and cysteine 334-cysteine 340. Asparagine 392 is a glycosylation site (N-linked (GlcNAc...) asparagine). The interval 423 to 839 (NHIRRNVESL…KEIEKEAVRG (417 aa)) is ODF. A Cu cation-binding site is contributed by histidine 463. Cysteine 468 and cysteine 478 are disulfide-bonded. The 2'-(S-cysteinyl)-histidine (Cys-His) cross-link spans 479 to 481 (CLH). Residues histidine 481 and histidine 490 each coordinate Cu cation. Asparagine 538 carries N-linked (GlcNAc...) asparagine glycosylation. Intrachain disulfides connect cysteine 589/cysteine 656 and cysteine 743/cysteine 748. Cu cation is bound by residues histidine 599, histidine 603, and histidine 630. An ODG region spans residues 840 to 1233 (TIIRKNVNSL…VFLAPAKTTH (394 aa)). Histidine 880 contacts Cu cation. A disulfide bridge links cysteine 886 with cysteine 896. Asparagine 890 carries N-linked (GlcNAc...) asparagine glycosylation. A cross-link (2'-(S-cysteinyl)-histidine (Cys-His)) is located at residues 897-899 (CQH). Cu cation contacts are provided by histidine 899, histidine 908, histidine 1008, histidine 1012, and histidine 1039. 2 disulfides stabilise this stretch: cysteine 998/cysteine 1065 and cysteine 1152/cysteine 1158.

This sequence belongs to the tyrosinase family. Hemocyanin subfamily. In terms of assembly, decamers of large identical subunits (350 kDa), each containing 7 globular oxygen-binding domains: ODA, ODB, ODC, ODD, ODE, ODF, and ODG. It depends on Cu(2+) as a cofactor.

Its function is as follows. Hemocyanins are copper-containing oxygen carriers occurring freely dissolved in the hemolymph of many mollusks and arthropods. The protein is Hemocyanin A-type, units Ode to Odg of Enteroctopus dofleini (North Pacific giant octopus).